The primary structure comprises 434 residues: MKELFLSLFTVKDLRNKFLFTLFVLFLFRVGSYLPIPGIDSVALKSYFKSQSDFSIANYFDFFSGGAFSNFSIFMLSIGPYISASIIVQLLVYSFPSLKKMQEGDGGRQKTKKYTKYLTIVAAVVQGYATSLYAKGIPGAVTIPFYRYIFVAILTVTTGTFILLWFGEQINQRGVGNGTSLIIFSGIVVRLQAALFNLFQSMQDPSQNVNPVFVILIISIFILVVILIIYEYKAQMRIAIHYARANSNNTVSSYLPIKLNPSGVLPVIFASVLITLPLQILSGFAETSSIARQILSYLRPNGFYYTFLNVILIIGFTYFYSKIQLSPKDISNNIRKNGGTIPGIKSDEMEKYLDEIMNKTLFSGSIFLSIIAIIPFLVQNIFRFPHDVSRIMGGSSLLIMVGVALDTLIHIDAYLKTQGFSHGNKKNYAFLQKI.

Transmembrane regions (helical) follow at residues 19-39, 73-93, 117-137, 148-168, 179-199, 209-229, 264-284, 300-320, 362-382, and 391-411; these read LFTLFVLFLFRVGSYLPIPGI, IFMLSIGPYISASIIVQLLVY, YLTIVAAVVQGYATSLYAKGI, YIFVAILTVTTGTFILLWFGE, TSLIIFSGIVVRLQAALFNLF, VNPVFVILIISIFILVVILII, VLPVIFASVLITLPLQILSGF, PNGFYYTFLNVILIIGFTYFY, FSGSIFLSIIAIIPFLVQNIF, and IMGGSSLLIMVGVALDTLIHI.

Belongs to the SecY/SEC61-alpha family. In terms of assembly, component of the Sec protein translocase complex. Heterotrimer consisting of SecY, SecE and SecG subunits. The heterotrimers can form oligomers, although 1 heterotrimer is thought to be able to translocate proteins. Interacts with the ribosome. Interacts with SecDF, and other proteins may be involved. Interacts with SecA.

It localises to the cell inner membrane. The central subunit of the protein translocation channel SecYEG. Consists of two halves formed by TMs 1-5 and 6-10. These two domains form a lateral gate at the front which open onto the bilayer between TMs 2 and 7, and are clamped together by SecE at the back. The channel is closed by both a pore ring composed of hydrophobic SecY resides and a short helix (helix 2A) on the extracellular side of the membrane which forms a plug. The plug probably moves laterally to allow the channel to open. The ring and the pore may move independently. The sequence is that of Protein translocase subunit SecY from Borreliella burgdorferi (strain ATCC 35210 / DSM 4680 / CIP 102532 / B31) (Borrelia burgdorferi).